Consider the following 495-residue polypeptide: uncharacterized protein (495 aa).

It is found in the cytoplasm. The protein resides in the nucleus. This is an uncharacterized protein from Saccharomyces cerevisiae (strain ATCC 204508 / S288c) (Baker's yeast).